The chain runs to 94 residues: Surfactant-associated protein 3 (94 aa).

Found in lung alveolar cells type I and II, as well as alveolar macrophages (at protein level). Detected also in testis and kidney. Expressed by different tissues of the ocular system like cornea, conjuctiva, lacrimal gland, eyelid and efferent tear ducts (at protein level). From these tissues is secreted into the tear film (at protein level).

Its subcellular location is the cytoplasm. The protein resides in the secreted. In terms of biological role, putative surfactant protein. May be involved in wound healing and in the reduction of the surface tension at the ocular surface. This is Surfactant-associated protein 3 (SFTA3) from Homo sapiens (Human).